Here is a 303-residue protein sequence, read N- to C-terminus: Aquaporin NIP1-2 (303 aa).

Residues 1 to 39 (MAGREDGAAAGAMEEGQDSKEVKCESSEDGSSSSSSSRC) form a disordered region. Residues 17–26 (QDSKEVKCES) show a composition bias toward basic and acidic residues. 2 consecutive transmembrane segments (helical) span residues 66–86 (ILAE…AVVV) and 91–111 (GGAV…MVLV). The NPA 1 signature appears at 123 to 125 (NPA). The next 3 helical transmembrane spans lie at 145–165 (VVAQ…VFGG), 188–208 (AAAL…GVAT), and 212–232 (AIGE…VLFA). The short motif at 241–243 (NPA) is the NPA 2 element. A helical transmembrane segment spans residues 255-275 (YGGVWVYVAAPVSGTVCGAWA).

Belongs to the MIP/aquaporin (TC 1.A.8) family. NIP (TC 1.A.8.12) subfamily. Expressed in roots and leaves, and at lower levels in anthers.

The protein resides in the membrane. Aquaporins facilitate the transport of water and small neutral solutes across cell membranes. The polypeptide is Aquaporin NIP1-2 (NIP1-2) (Oryza sativa subsp. japonica (Rice)).